We begin with the raw amino-acid sequence, 166 residues long: Interleukin-3 (166 aa).

An N-terminal signal peptide occupies residues 1 to 27 (MVLASSTTSILCMLLPLLMLFHQGLQI). Cystine bridges form between C43–C106 and C105–C166. N60 and N70 each carry an N-linked (GlcNAc...) asparagine glycan. Positions 145-166 (SVSRPPQPTSSSDNFRPMTVEC) are disordered.

It belongs to the IL-3 family. Monomer. As to expression, activated T-cells, mast cells, natural killer cells.

Its subcellular location is the secreted. Functionally, cytokine secreted predominantly by activated T-lymphocytes as well as mast cells and osteoblastic cells that controls the production and differentiation of hematopoietic progenitor cells into lineage-restricted cells. Also stimulates mature basophils, eosinophils, and monocytes to become functionally activated. In addition, plays an important role in neural cell proliferation and survival. Participates as well in bone homeostasis and inhibits osteoclast differentiation by preventing NF-kappa-B nuclear translocation and activation. Mechanistically, exerts its biological effects through a receptor composed of IL3RA subunit and a signal transducing subunit IL3RB. Receptor stimulation results in the rapid activation of JAK2 kinase activity leading to STAT5-mediated transcriptional program. Alternatively, contributes to cell survival under oxidative stress in non-hematopoietic systems by activating pathways mediated by PI3K/AKT and ERK. The chain is Interleukin-3 (Il3) from Rattus norvegicus (Rat).